A 119-amino-acid polypeptide reads, in one-letter code: Na(+)/H(+) antiporter subunit G (119 aa).

Helical transmembrane passes span 7-29 (IISI…IIRF), 44-61 (TLGV…FFLV), and 66-88 (VGKL…MMMG).

This sequence belongs to the CPA3 antiporters (TC 2.A.63) subunit G family. Forms a heterooligomeric complex that consists of seven subunits: MrpA, MrpB, MrpC, MrpD, MrpE, MrpF and MrpG.

The protein localises to the cell membrane. Mnh complex is a Na(+)Li(+)/H(+) antiporter involved in Na(+) and/or Li(+) excretion and Na(+) resistance. Na(+)/H(+) antiport consumes a transmembrane electrical potential, and is thus inferred to be electrogenic. Does not transport K(+), Ca(2+) or Mg(2+). This chain is Na(+)/H(+) antiporter subunit G (mrpG), found in Alkalihalophilus pseudofirmus (strain ATCC BAA-2126 / JCM 17055 / OF4) (Bacillus pseudofirmus).